The chain runs to 190 residues: Dynactin subunit 6 (190 aa).

T186 is modified (phosphothreonine).

This sequence belongs to the dynactin subunits 5/6 family. Dynactin subunit 6 subfamily. As to quaternary structure, subunit of dynactin, a multiprotein complex part of a tripartite complex with dynein and a adapter, such as BICDL1, BICD2 or HOOK3. The dynactin complex is built around ACTR1A/ACTB filament and consists of an actin-related filament composed of a shoulder domain, a pointed end and a barbed end. Its length is defined by its flexible shoulder domain. The soulder is composed of 2 DCTN1 subunits, 4 DCTN2 and 2 DCTN3. The 4 DCNT2 (via N-terminus) bind the ACTR1A filament and act as molecular rulers to determine the length. The pointed end is important for binding dynein-dynactin cargo adapters. Consists of 4 subunits: ACTR10, DCNT4, DCTN5 and DCTN6. Within the complex DCTN6 forms a heterodimer with DCTN5. The barbed end is composed of a CAPZA1:CAPZB heterodimers, which binds ACTR1A/ACTB filament and dynactin and stabilizes dynactin. Interacts with PLK1. Interacts with N4BP2L1. Post-translationally, phosphorylation at Thr-186 by CDK1 during mitotic prometaphase creates a binding site for PLK1 that facilitates its recruitment to kinetochores.

Its subcellular location is the cytoplasm. The protein resides in the cytoskeleton. It localises to the chromosome. It is found in the centromere. The protein localises to the kinetochore. Part of the dynactin complex that activates the molecular motor dynein for ultra-processive transport along microtubules. This is Dynactin subunit 6 (DCTN6) from Sus scrofa (Pig).